The primary structure comprises 312 residues: Ribosomal protein L11 methyltransferase (312 aa).

Residues T160, G181, D203, and N246 each coordinate S-adenosyl-L-methionine.

Belongs to the methyltransferase superfamily. PrmA family.

The protein resides in the cytoplasm. It carries out the reaction L-lysyl-[protein] + 3 S-adenosyl-L-methionine = N(6),N(6),N(6)-trimethyl-L-lysyl-[protein] + 3 S-adenosyl-L-homocysteine + 3 H(+). Its function is as follows. Methylates ribosomal protein L11. This Staphylococcus aureus (strain bovine RF122 / ET3-1) protein is Ribosomal protein L11 methyltransferase.